The following is a 686-amino-acid chain: Soluble guanylate cyclase gcy-34 (686 aa).

Histidine 105 serves as a coordination point for heme. Coiled coils occupy residues 306–335 and 398–432; these read KKHMNAMTKEEREQEVEAMEEEVESNELTQ and VEVNLQLEANNEQLETMTHELEVERQKTDSILKDM. Residues 455–583 enclose the Guanylate cyclase domain; the sequence is TVMFCDLPAF…ETVTLASQME (129 aa). Residues aspartate 460 and aspartate 504 each coordinate Mg(2+).

It belongs to the adenylyl cyclase class-4/guanylyl cyclase family. In terms of assembly, heterodimer; with other soluble guanylate cyclases. Heme is required as a cofactor. In terms of tissue distribution, expressed in a small number of neurons, corresponding to URX, AQR and PQR neurons.

The protein localises to the cytoplasm. It carries out the reaction GTP = 3',5'-cyclic GMP + diphosphate. May be regulated by molecular oxygen. Probably not activated by nitric oxide (NO). In terms of biological role, synthesizes cyclic GMP (cGMP) from GTP. May be involved in sensitivity to quinine by regulating egl-4 activity through the production of cGMP. This chain is Soluble guanylate cyclase gcy-34 (gcy-34), found in Caenorhabditis elegans.